Consider the following 676-residue polypeptide: Phosphatidylinositol-3,5-bisphosphate 3-phosphatase MTMR6 (676 aa).

The 377-residue stretch at 125–501 folds into the Myotubularin phosphatase domain; that stretch reads GWRRLDWNSE…ARFTVWTAMY (377 aa). The a 1,2-diacyl-sn-glycero-3-phospho-(1D-myo-inositol-3,5-bisphosphate) site is built by asparagine 249, asparagine 274, and isoleucine 275. Positions 249, 274, and 275 each coordinate a 1,2-diacyl-sn-glycero-3-phospho-(1D-myo-inositol-3-phosphate). Residues 249-252, 274-275, and 335-341 contribute to the substrate site; these read NKVQ, NI, and CSDGWDR. Cysteine 335 serves as the catalytic Phosphocysteine intermediate. A 1,2-diacyl-sn-glycero-3-phospho-(1D-myo-inositol-3,5-bisphosphate) contacts are provided by serine 336, aspartate 337, glycine 338, tryptophan 339, aspartate 340, arginine 341, lysine 377, and arginine 381. Residues serine 336, aspartate 337, glycine 338, tryptophan 339, aspartate 340, and arginine 341 each contribute to the a 1,2-diacyl-sn-glycero-3-phospho-(1D-myo-inositol-3-phosphate) site. A 1,2-diacyl-sn-glycero-3-phospho-(1D-myo-inositol-3-phosphate) is bound at residue arginine 381. Arginine 381 serves as a coordination point for substrate. Residues 618 to 675 form an FYVE-type zinc finger; it reads KWQPLRGADRCSNPACRGEFSSTIERRIHCHLCGMIFCRRCLKVSADERERVCDKCKT.

It belongs to the protein-tyrosine phosphatase family. Non-receptor class myotubularin subfamily. As to quaternary structure, heterodimer with mtm-9. Expressed in intestinal cells. Expressed in head neurons, pre-anal ganglion, hypodermal cells, anal depressor muscle and non-neuronal cells in the tail.

The protein resides in the cytoplasm. It localises to the membrane. The protein localises to the apical cell membrane. It catalyses the reaction a 1,2-diacyl-sn-glycero-3-phospho-(1D-myo-inositol-3,5-bisphosphate) + H2O = a 1,2-diacyl-sn-glycero-3-phospho-(1D-myo-inositol-5-phosphate) + phosphate. The enzyme catalyses a 1,2-diacyl-sn-glycero-3-phospho-(1D-myo-inositol-3-phosphate) + H2O = a 1,2-diacyl-sn-glycero-3-phospho-(1D-myo-inositol) + phosphate. The catalysed reaction is 1,2-dioctanoyl-sn-glycero-3-phospho-(1D-myo-inositol-3,5-bisphosphate) + H2O = 1,2-dioctanoyl-sn-glycero-3-phospho-(1D-myo-inositol-5-phosphate) + phosphate. It carries out the reaction 1,2-dioctanoyl-sn-glycero-3-phospho-(1-D-myo-inositol-3-phosphate) + H2O = 1,2-dioctanoyl-sn-glycero-3-phospho-(1D-myo-inositol) + phosphate. In terms of biological role, probable lipid phosphatase that specifically dephosphorylates the D-3 position of phosphatidylinositol 3-phosphate and phosphatidylinositol 3,5-bisphosphate, generating phosphatidylinositol and phosphatidylinositol 5-phosphate. In association with mtm-9, plays a role in endosome trafficking probably by regulating phosphatidylinositol-3-phosphate levels. Regulates fluid phase endocytosis in coelomocytes. Controls the endosomal localization of sorting nexin snx-3 and the levels of sorting receptor mig-14. By regulating the retrograde transport of mig-14, may be involved in the secretion of Wnt ligands such as egl-20. Regulates posterior migration of QL neuroblast descendants and the anterior migration of QR neuroblast descendants and HSN neurons during larval development. Involved in the formation of correct synapse number in DA9 motor neurons probably in part by regulating the secretion of Wnt ligand egl-20. The chain is Phosphatidylinositol-3,5-bisphosphate 3-phosphatase MTMR6 from Caenorhabditis elegans.